Here is a 174-residue protein sequence, read N- to C-terminus: Acetolactate synthase small subunit (174 aa).

In terms of domain architecture, ACT spans 4 to 78; it reads TLSVLVQDEA…NILNVQDVTN (75 aa).

The protein belongs to the acetolactate synthase small subunit family. Dimer of large and small chains.

It localises to the plastid. The protein localises to the chloroplast. The enzyme catalyses 2 pyruvate + H(+) = (2S)-2-acetolactate + CO2. It functions in the pathway amino-acid biosynthesis; L-isoleucine biosynthesis; L-isoleucine from 2-oxobutanoate: step 1/4. Its pathway is amino-acid biosynthesis; L-valine biosynthesis; L-valine from pyruvate: step 1/4. This chain is Acetolactate synthase small subunit (ilvH), found in Porphyra purpurea (Red seaweed).